A 314-amino-acid polypeptide reads, in one-letter code: uncharacterized protein (314 aa).

The HTH araC/xylS-type domain occupies threonine 192 to leucine 289. DNA-binding regions (H-T-H motif) lie at residues threonine 209–leucine 230 and isoleucine 257–isoleucine 279.

This is an uncharacterized protein from Bacillus subtilis (strain 168).